Here is a 544-residue protein sequence, read N- to C-terminus: Probable protein kinase UbiB (544 aa).

Residues 123–505 (EFDEQALASA…GRQKSHNVRS (383 aa)) enclose the Protein kinase domain. ATP is bound by residues 129–137 (LASASIAQV) and Lys-156. Asp-291 acts as the Proton acceptor in catalysis. A helical membrane pass occupies residues 522 to 540 (LPLWLSCGTLVTVLLVLLL).

The protein belongs to the ABC1 family. UbiB subfamily.

It is found in the cell inner membrane. It participates in cofactor biosynthesis; ubiquinone biosynthesis [regulation]. Functionally, is probably a protein kinase regulator of UbiI activity which is involved in aerobic coenzyme Q (ubiquinone) biosynthesis. The protein is Probable protein kinase UbiB of Actinobacillus pleuropneumoniae serotype 7 (strain AP76).